A 477-amino-acid polypeptide reads, in one-letter code: Probable cytosolic Fe-S cluster assembly factor GK14772 (477 aa).

8 residues coordinate [4Fe-4S] cluster: Cys23, Cys69, Cys72, Cys75, Cys188, Cys244, Cys396, and Cys400.

Belongs to the NARF family.

Functionally, component of the cytosolic iron-sulfur (Fe/S) protein assembly machinery. Required for maturation of extramitochondrial Fe/S proteins. This chain is Probable cytosolic Fe-S cluster assembly factor GK14772, found in Drosophila willistoni (Fruit fly).